The following is a 107-amino-acid chain: Multidrug resistance protein mmr (107 aa).

4 helical membrane passes run alanine 2–leucine 19, leucine 29–serine 51, valine 58–leucine 77, and proline 82–alanine 104.

Belongs to the drug/metabolite transporter (DMT) superfamily. Small multidrug resistance (SMR) (TC 2.A.7.1) family. Mmr subfamily.

Its subcellular location is the cell membrane. Multidrug efflux pump. Confers resistance to tetraphenylphosphonium (TPP), erythromycin, ethidium bromide, acriflavine, safranin O and pyronin Y. The chain is Multidrug resistance protein mmr (mmr) from Mycobacterium leprae (strain TN).